The following is a 353-amino-acid chain: MSQKRNLPSWMSSRDPEITPSKSHCKKPKDEGPTEEHNSRNAPSNKSEHAEPSSNTTEFSKLMEGVVFVLSGFVNPERSTLRSQALTMGATYQPDWNAGSTLLICAFPNTPKFRQVETNGGTIISKEWITECYAQKKLVDIEQYLMHAGKPWRKSSSPQDANREKREHLSKKPEKQVEKKTETRGTPSTSSKNRSACNLVKEPFFVTEVKKWARDDLSQTISWLESQEEKPEPGEIKRIAAEGVLTCLQDAIDSLEQKQDIGSVTELWSFVPRVVKELGKMESSSKKENSTASKEEVCKQAKSWKKIYEAELAKPGEDESTSRVACGYDSDMTVEMTEEEIELAYRNVSLECL.

Positions 1–12 (MSQKRNLPSWMS) are enriched in polar residues. The interval 1 to 57 (MSQKRNLPSWMSSRDPEITPSKSHCKKPKDEGPTEEHNSRNAPSNKSEHAEPSSNTT) is disordered. Over residues 28–39 (PKDEGPTEEHNS) the composition is skewed to basic and acidic residues. The region spanning 58-146 (EFSKLMEGVV…KLVDIEQYLM (89 aa)) is the BRCT 1 domain. The interval 150-194 (KPWRKSSSPQDANREKREHLSKKPEKQVEKKTETRGTPSTSSKNR) is disordered. The span at 161 to 183 (ANREKREHLSKKPEKQVEKKTET) shows a compositional bias: basic and acidic residues. Residues 184 to 194 (RGTPSTSSKNR) show a composition bias toward polar residues. A coiled-coil region spans residues 240–260 (AAEGVLTCLQDAIDSLEQKQD). One can recognise a BRCT 2 domain in the interval 266 to 347 (ELWSFVPRVV…EEEIELAYRN (82 aa)).

Homodimer. Interacts with polynucleotide kinase (PNK), DNA polymerase-beta (POLB) and DNA ligase III (LIG3). Interacts with ZDP and ROS1. Binds to various forms of double-stranded DNA (e.g. methylated, unmethylated, with single-nucleotide gap flanked by 3'-phosphate or 5'-phosphate ends).

The protein localises to the nucleus. In terms of biological role, corrects defective DNA strand-break repair and sister chromatid exchange following treatment with ionizing radiation and alkylating agents. Involved in DNA demethylation pathway by stimulating cytosine methylation (5-meC) excision, gap tailoring, and DNA ligation. This chain is DNA-repair protein XRCC1, found in Arabidopsis thaliana (Mouse-ear cress).